Consider the following 637-residue polypeptide: tRNA 5-methylaminomethyl-2-thiouridine biosynthesis bifunctional protein MnmC (637 aa).

The tract at residues 1-20 (MSERIEWLEDGTAGGSPYSP) is disordered. Residues 1–232 (MSERIEWLED…KRDNLQGEYQ (232 aa)) are tRNA (mnm(5)s(2)U34)-methyltransferase. The tract at residues 255-637 (IGAGLAGSAV…YATRLQPSGS (383 aa)) is FAD-dependent cmnm(5)s(2)U34 oxidoreductase.

It in the N-terminal section; belongs to the methyltransferase superfamily. tRNA (mnm(5)s(2)U34)-methyltransferase family. In the C-terminal section; belongs to the DAO family. FAD is required as a cofactor.

It localises to the cytoplasm. The catalysed reaction is 5-aminomethyl-2-thiouridine(34) in tRNA + S-adenosyl-L-methionine = 5-methylaminomethyl-2-thiouridine(34) in tRNA + S-adenosyl-L-homocysteine + H(+). In terms of biological role, catalyzes the last two steps in the biosynthesis of 5-methylaminomethyl-2-thiouridine (mnm(5)s(2)U) at the wobble position (U34) in tRNA. Catalyzes the FAD-dependent demodification of cmnm(5)s(2)U34 to nm(5)s(2)U34, followed by the transfer of a methyl group from S-adenosyl-L-methionine to nm(5)s(2)U34, to form mnm(5)s(2)U34. In Polaromonas naphthalenivorans (strain CJ2), this protein is tRNA 5-methylaminomethyl-2-thiouridine biosynthesis bifunctional protein MnmC.